The following is a 393-amino-acid chain: Chorismate synthase (393 aa).

Residues Arg40 and Arg46 each coordinate NADP(+). Residues 129–131, 249–250, Gly301, 316–320, and Arg342 each bind FMN; these read RSS, QA, and KPIPT.

This sequence belongs to the chorismate synthase family. Homotetramer. It depends on FMNH2 as a cofactor.

The catalysed reaction is 5-O-(1-carboxyvinyl)-3-phosphoshikimate = chorismate + phosphate. It functions in the pathway metabolic intermediate biosynthesis; chorismate biosynthesis; chorismate from D-erythrose 4-phosphate and phosphoenolpyruvate: step 7/7. In terms of biological role, catalyzes the anti-1,4-elimination of the C-3 phosphate and the C-6 proR hydrogen from 5-enolpyruvylshikimate-3-phosphate (EPSP) to yield chorismate, which is the branch point compound that serves as the starting substrate for the three terminal pathways of aromatic amino acid biosynthesis. This reaction introduces a second double bond into the aromatic ring system. The protein is Chorismate synthase of Geotalea daltonii (strain DSM 22248 / JCM 15807 / FRC-32) (Geobacter daltonii).